The chain runs to 647 residues: DNA mismatch repair protein MutL (647 aa).

The segment at 377 to 396 is disordered; it reads EEPQAVKQSAQLWQPPKQEW. Residues 387–396 show a composition bias toward low complexity; the sequence is QLWQPPKQEW.

It belongs to the DNA mismatch repair MutL/HexB family.

In terms of biological role, this protein is involved in the repair of mismatches in DNA. It is required for dam-dependent methyl-directed DNA mismatch repair. May act as a 'molecular matchmaker', a protein that promotes the formation of a stable complex between two or more DNA-binding proteins in an ATP-dependent manner without itself being part of a final effector complex. The sequence is that of DNA mismatch repair protein MutL from Bacillus cereus (strain AH187).